A 239-amino-acid polypeptide reads, in one-letter code: Methylthioribulose-1-phosphate dehydratase (239 aa).

Cys94 contributes to the substrate binding site. Residues His112 and His114 each coordinate Zn(2+). The active-site Proton donor/acceptor is Glu136. His192 contacts Zn(2+).

The protein belongs to the aldolase class II family. MtnB subfamily. Zn(2+) is required as a cofactor.

The protein localises to the cytoplasm. The enzyme catalyses 5-(methylsulfanyl)-D-ribulose 1-phosphate = 5-methylsulfanyl-2,3-dioxopentyl phosphate + H2O. The protein operates within amino-acid biosynthesis; L-methionine biosynthesis via salvage pathway; L-methionine from S-methyl-5-thio-alpha-D-ribose 1-phosphate: step 2/6. Functionally, catalyzes the dehydration of methylthioribulose-1-phosphate (MTRu-1-P) into 2,3-diketo-5-methylthiopentyl-1-phosphate (DK-MTP-1-P). Functions in the methionine salvage pathway. May play a role in apoptosis. The sequence is that of Methylthioribulose-1-phosphate dehydratase from Xenopus tropicalis (Western clawed frog).